The sequence spans 753 residues: Catalase-peroxidase (753 aa).

A cross-link (tryptophyl-tyrosyl-methioninium (Trp-Tyr) (with M-269)) is located at residues 91–243; that stretch reads WHSAGTYRIG…LGAVQMGLIY (153 aa). Histidine 92 (proton acceptor) is an active-site residue. A cross-link (tryptophyl-tyrosyl-methioninium (Tyr-Met) (with W-91)) is located at residues 243–269; it reads YVNPEGPDGNPDPLAAAHDIRETFARM. Histidine 284 is a binding site for heme b.

This sequence belongs to the peroxidase family. Peroxidase/catalase subfamily. Homodimer or homotetramer. The cofactor is heme b. Post-translationally, formation of the three residue Trp-Tyr-Met cross-link is important for the catalase, but not the peroxidase activity of the enzyme.

It catalyses the reaction H2O2 + AH2 = A + 2 H2O. The catalysed reaction is 2 H2O2 = O2 + 2 H2O. In terms of biological role, bifunctional enzyme with both catalase and broad-spectrum peroxidase activity. The chain is Catalase-peroxidase from Paraburkholderia xenovorans (strain LB400).